A 104-amino-acid polypeptide reads, in one-letter code: Cell division protein FtsL (104 aa).

At 1–19 the chain is on the cytoplasmic side; the sequence is MSTPNTHLLCLIATDLRKH. The helical transmembrane segment at 20–39 threads the bilayer; that stretch reads FFAVLVGMLIVCSAIYNVYT. Residues 40–104 lie on the Periplasmic side of the membrane; sequence THKTRGLVTQ…KKNSVLVELR (65 aa).

This sequence belongs to the FtsL family. As to quaternary structure, part of a complex composed of FtsB, FtsL and FtsQ.

It localises to the cell inner membrane. In terms of biological role, essential cell division protein. May link together the upstream cell division proteins, which are predominantly cytoplasmic, with the downstream cell division proteins, which are predominantly periplasmic. The sequence is that of Cell division protein FtsL from Psychromonas ingrahamii (strain DSM 17664 / CCUG 51855 / 37).